Reading from the N-terminus, the 124-residue chain is Modulator protein MzrA (124 aa).

Residues 1 to 7 lie on the Cytoplasmic side of the membrane; the sequence is MINRRMK. Residues 8-28 form a helical membrane-spanning segment; that stretch reads TGFVFHLLLLLLPLVVLVTSS. Topologically, residues 29-124 are periplasmic; that stretch reads RRTADDVTLH…KLSQQPFKLG (96 aa).

Belongs to the MzrA family. In terms of assembly, interacts with EnvZ.

It is found in the cell inner membrane. Functionally, modulates the activity of the EnvZ/OmpR two-component regulatory system, probably by directly modulating EnvZ enzymatic activity and increasing stability of phosphorylated OmpR. The sequence is that of Modulator protein MzrA from Musicola paradisiaca (strain Ech703) (Dickeya paradisiaca).